The sequence spans 435 residues: Transmembrane protease serine 4 (435 aa).

The Cytoplasmic portion of the chain corresponds to 1–30 (MESDSGQPLNNRDIVPFRKPRRPQETFKKV). Residues 31–51 (GIPIIAVLLSLIALVIVALLI) form a helical; Signal-anchor for type II membrane protein membrane-spanning segment. Topologically, residues 52 to 435 (KVILDKYYFI…WIYNVRKSEM (384 aa)) are extracellular. The LDL-receptor class A domain occupies 59–101 (YFICGSPLTFIQRGQLCDGHLDCASGEDEEHCVKDFPEKPGVA). 8 cysteine pairs are disulfide-bonded: Cys-62–Cys-81, Cys-75–Cys-90, Cys-125–Cys-181, Cys-138–Cys-191, Cys-194–Cys-308, Cys-228–Cys-244, Cys-354–Cys-370, and Cys-381–Cys-408. The SRCR domain maps to 102-202 (VRLSKDRSTL…DCGKSLKTPR (101 aa)). N-linked (GlcNAc...) asparagine glycans are attached at residues Asn-128 and Asn-176. A Peptidase S1 domain is found at 203-432 (VVGGVEAPVD…YLNWIYNVRK (230 aa)). Catalysis depends on charge relay system residues His-243 and Asp-288. Ser-385 acts as the Charge relay system in catalysis.

Belongs to the peptidase S1 family. Post-translationally, proteolytically processed; probably by an autocatalytic mechanism.

The protein localises to the cell membrane. Its subcellular location is the secreted. In terms of biological role, plasma membrane-anchored serine protease that directly induces processing of pro-uPA/PLAU into the active form through proteolytic activity. Seems to be capable of activating ENaC. In Mus musculus (Mouse), this protein is Transmembrane protease serine 4.